We begin with the raw amino-acid sequence, 521 residues long: Probable glycine dehydrogenase (decarboxylating) subunit 2 (521 aa).

An N6-(pyridoxal phosphate)lysine modification is found at Lys279.

The protein belongs to the GcvP family. C-terminal subunit subfamily. As to quaternary structure, the glycine cleavage system is composed of four proteins: P, T, L and H. In this organism, the P 'protein' is a heterodimer of two subunits. Requires pyridoxal 5'-phosphate as cofactor.

It carries out the reaction N(6)-[(R)-lipoyl]-L-lysyl-[glycine-cleavage complex H protein] + glycine + H(+) = N(6)-[(R)-S(8)-aminomethyldihydrolipoyl]-L-lysyl-[glycine-cleavage complex H protein] + CO2. Functionally, the glycine cleavage system catalyzes the degradation of glycine. The P protein binds the alpha-amino group of glycine through its pyridoxal phosphate cofactor; CO(2) is released and the remaining methylamine moiety is then transferred to the lipoamide cofactor of the H protein. The polypeptide is Probable glycine dehydrogenase (decarboxylating) subunit 2 (Staphylothermus marinus (strain ATCC 43588 / DSM 3639 / JCM 9404 / F1)).